We begin with the raw amino-acid sequence, 1016 residues long: C2 domain-containing protein 5 (1016 aa).

In terms of domain architecture, C2 spans 1–109 (MPGKLKVKIV…EAATVISGWF (109 aa)). Residues D19, D26, D76, D78, S81, and D84 each coordinate Ca(2+). S197 is subject to Phosphoserine; by PKB/AKT2. Residues S200 and S260 each carry the phosphoserine modification. Positions 265 to 330 (LKEIPFNEDP…SGSAGKEGGP (66 aa)) are disordered. Positions 274–289 (PNPNTHSSGPSTPLKN) are enriched in polar residues. A compositionally biased stretch (low complexity) spans 290–318 (QTYSFSPSKSYSRQSSSSDTDLSLTPKTG). Phosphoserine occurs at positions 293, 295, 304, 305, and 306. T317 is modified (phosphothreonine). Over residues 319 to 328 (MGSGSAGKEG) the composition is skewed to gly residues. Position 323 is a phosphoserine (S323). T601 bears the Phosphothreonine mark. A disordered region spans residues 636-668 (VSEEMIGSPIPEPRQRSRLLRSQSESSDEVTEL). Residues S643, S657, S659, S661, and S662 each carry the phosphoserine modification. T666 is subject to Phosphothreonine. Phosphoserine occurs at positions 671, 817, and 869.

Requires Ca(2+) as cofactor. Phosphorylated on Ser-197 by active myristoylated kinase AKT2; insulin-stimulated phosphorylation by AKT2 regulates SLC2A4/GLUT4 translocation into the plasma membrane. In terms of tissue distribution, expressed in liver, muscle and fat.

The protein localises to the cytoplasmic vesicle membrane. It is found in the cytoplasm. Its subcellular location is the cell cortex. The protein resides in the cell membrane. It localises to the cell projection. The protein localises to the ruffle. In terms of biological role, required for insulin-stimulated glucose transport and glucose transporter SLC2A4/GLUT4 translocation from intracellular glucose storage vesicle (GSV) to the plasma membrane (PM) in adipocytes. Binds phospholipid membranes in a calcium-dependent manner and is necessary for the optimal membrane fusion between SLC2A4/GLUT4 GSV and the PM. This Mus musculus (Mouse) protein is C2 domain-containing protein 5 (C2cd5).